The sequence spans 154 residues: Ribonuclease H (154 aa).

An RNase H type-1 domain is found at 1–142; the sequence is MQKQIEIFTD…CDELAKKGAE (142 aa). Residues Asp10, Glu48, Asp70, and Asp134 each contribute to the Mg(2+) site.

Belongs to the RNase H family. As to quaternary structure, monomer. The cofactor is Mg(2+).

It localises to the cytoplasm. It carries out the reaction Endonucleolytic cleavage to 5'-phosphomonoester.. Functionally, endonuclease that specifically degrades the RNA of RNA-DNA hybrids. This Haemophilus influenzae (strain 86-028NP) protein is Ribonuclease H.